A 133-amino-acid chain; its full sequence is Hydrogenase maturation factor HypA (133 aa).

His-2 lines the Ni(2+) pocket. Residues Cys-73, Cys-75, Cys-105, and Cys-108 each coordinate Zn(2+).

The protein belongs to the HypA/HybF family.

Its function is as follows. Involved in the maturation of [NiFe] hydrogenases. Required for nickel insertion into the metal center of the hydrogenase. In Methanosarcina barkeri (strain Fusaro / DSM 804), this protein is Hydrogenase maturation factor HypA.